Reading from the N-terminus, the 235-residue chain is Ornithine decarboxylase antizyme 3 (235 aa).

Serine 9 and serine 12 each carry phosphoserine.

This sequence belongs to the ODC antizyme family. As to quaternary structure, interacts with ODC1 and thereby sterically blocks ODC homodimerization. Interacts with AZIN2; this interaction disrupts the interaction between the antizyme and ODC1. Interacts with GGN. Testis specific.

Its subcellular location is the nucleus. It localises to the cytoplasm. Its function is as follows. Ornithine decarboxylase (ODC) antizyme protein that negatively regulates ODC activity and intracellular polyamine biosynthesis and uptake in response to increased intracellular polyamine levels. Binds to ODC monomers, inhibiting the assembly of the functional ODC homodimers. Does not target the ODC monomers for degradation, which allows a protein synthesis-independent restoration of ODC activity. Stabilizes AZIN2 by interfering with its ubiquitination. Involved in the translocation of AZNI2 from ER-Golgi intermediate compartment (ERGIC) to the cytosol. Probably plays a key role in spermatogenesis by regulating the intracellular concentration of polyamines in haploid germ cells. This Homo sapiens (Human) protein is Ornithine decarboxylase antizyme 3 (OAZ3).